We begin with the raw amino-acid sequence, 346 residues long: Aldose 1-epimerase (346 aa).

Residue Arg-79 coordinates substrate. The active-site Proton donor is the His-175. Asp-245 lines the substrate pocket. Glu-309 (proton acceptor) is an active-site residue.

The protein belongs to the aldose epimerase family.

The protein resides in the cytoplasm. The catalysed reaction is alpha-D-glucose = beta-D-glucose. It participates in carbohydrate metabolism; hexose metabolism. Mutarotase converts alpha-aldose to the beta-anomer. It is active on D-glucose, L-arabinose, D-xylose, D-galactose, maltose and lactose. The sequence is that of Aldose 1-epimerase (galM) from Escherichia coli (strain K12).